A 109-amino-acid polypeptide reads, in one-letter code: Transcription initiation factor IIA subunit 2 (109 aa).

It belongs to the TFIIA subunit 2 family. As to quaternary structure, TFIIA is a heterodimer of the large unprocessed subunit 1 and a small subunit gamma. It was originally believed to be a heterotrimer of an alpha (p35), a beta (p19) and a gamma subunit (p12). Interacts with NCOA6 general coactivator. TFIIA forms a complex with TBP. Interacts with HSF1 (via transactivation domain). Part of TBP-based Pol II pre-initiation complex (PIC), in which Pol II core assembles with general transcription factors and other specific initiation factors including GTF2E1, GTF2E2, GTF2F1, GTF2F2, TCEA1, ERCC2, ERCC3, GTF2H2, GTF2H3, GTF2H4, GTF2H5, GTF2A1, GTF2A2, GTF2B and TBP; this large multi-subunit PIC complex mediates DNA unwinding and targets Pol II core to the transcription start site where the first phosphodiester bond forms. In terms of assembly, (Microbial infection) Interacts with SV40 Large T antigen.

It is found in the nucleus. TFIIA is a component of the transcription machinery of RNA polymerase II and plays an important role in transcriptional activation. TFIIA in a complex with TBP mediates transcriptional activity. This chain is Transcription initiation factor IIA subunit 2 (GTF2A2), found in Homo sapiens (Human).